The chain runs to 1088 residues: RNA-directed RNA polymerase (1088 aa).

Residues 501-687 (LSYGDVTRFL…AKRYIAGGKI (187 aa)) form the RdRp catalytic domain.

The protein belongs to the reoviridae RNA-directed RNA polymerase family. As to quaternary structure, interacts with VP3 (Potential). Interacts with VP2; this interaction activates VP1. Interacts with NSP5; this interaction is probably necessary for the formation of functional virus factories. Interacts with NSP2; this interaction is weak. The cofactor is Mg(2+).

The protein localises to the virion. The enzyme catalyses RNA(n) + a ribonucleoside 5'-triphosphate = RNA(n+1) + diphosphate. In terms of biological role, RNA-directed RNA polymerase that is involved in both transcription and genome replication. Together with VP3 capping enzyme, forms an enzyme complex positioned near the channels situated at each of the five-fold vertices of the core. Following infection, the outermost layer of the virus is lost, leaving a double-layered particle (DLP) made up of the core and VP6 shell. VP1 then catalyzes the transcription of fully conservative plus-strand genomic RNAs that are extruded through the DLP's channels into the cytoplasm where they function as mRNAs for translation of viral proteins. One copy of each of the viral (+)RNAs is also recruited during core assembly, together with newly synthesized polymerase complexes and VP2. The polymerase of these novo-formed particles catalyzes the synthesis of complementary minus-strands leading to dsRNA formation. To do so, the polymerase specifically recognizes and binds 4 bases 5'-UGUG-3' in the conserved 3'-sequence of plus-strand RNA templates. VP2 presumably activates the autoinhibited VP1-RNA complex to coordinate packaging and genome replication. Once dsRNA synthesis is complete, the polymerase switches to the transcriptional mode, thus providing secondary transcription. In Rotavirus A (strain RVA/Human/United States/Wa/1974/G1P1A[8]) (RV-A), this protein is RNA-directed RNA polymerase.